We begin with the raw amino-acid sequence, 276 residues long: Tumor necrosis factor-inducible gene 6 protein (276 aa).

An N-terminal signal peptide occupies residues 1 to 17; it reads MIILIYLFVLVWEEAQG. In terms of domain architecture, Link spans 36–129; that stretch reads GVYHREARSG…SERWDAYCYN (94 aa). 3 disulfides stabilise this stretch: Cys58/Cys127, Cys82/Cys103, and Cys135/Cys161. Asn118 carries an N-linked (GlcNAc...) asparagine glycan. In terms of domain architecture, CUB spans 135-247; sequence CGGVFTDPKR…GGFQIKYVTV (113 aa). The Ca(2+) site is built by Glu183, Asp191, Asp232, Ser234, and Val235. Cys188 and Cys210 are disulfide-bonded. Asn258 carries N-linked (GlcNAc...) asparagine glycosylation.

In terms of assembly, interacts (via Link domain) with inter-alpha-inhibitor (I-alpha-I) component bikunin. Interacts with ITIH2/HC2; this interaction is required for transesterification of the HC to hyaluronan. Interacts (via Link and CUB domains) with ITIH1. Chondroitin sulfate may be required for the stability of the complex. Interacts (via Link domain) with various C-X-C and C-C chemokines including PF4, CXCL8, CXCL11, CXCL12, CCL2, CCL7, CCL19, CCL21, and CCL27; this interaction interferes with chemokine binding to glycosaminoglycans. Interacts (primarily via Link domain) with BMP2; this interaction is inhibited by hyaluronan. Interacts (via both Link and CUB domains) with TNFSF11. Interacts (via CUB domain) with FN1 (via type III repeats 9-14); this interaction enhances fibronectin fibril assembly. TNFAIP6 may act as a bridging molecule between FN1 and THBS1. Vascular smooth muscle cells.

Its subcellular location is the secreted. Its function is as follows. Major regulator of extracellular matrix organization during tissue remodeling. Catalyzes the transfer of a heavy chain (HC) from inter-alpha-inhibitor (I-alpha-I) complex to hyaluronan. Cleaves the ester bond between the C-terminus of the HC and GalNAc residue of the chondroitin sulfate chain in I-alpha-I complex followed by transesterification of the HC to hyaluronan. In the process, potentiates the antiprotease function of I-alpha-I complex through release of free bikunin. Acts as a catalyst in the formation of hyaluronan-HC oligomers and hyaluronan-rich matrix surrounding the cumulus cell-oocyte complex, a necessary step for oocyte fertilization. Assembles hyaluronan in pericellular matrices that serve as platforms for receptor clustering and signaling. Enables binding of hyaluronan deposited on the surface of macrophages to LYVE1 on lymphatic endothelium and facilitates macrophage extravasation. Alters hyaluronan binding to functionally latent CD44 on vascular endothelium, switching CD44 into an active state that supports leukocyte rolling. Modulates the interaction of chemokines with extracellular matrix components and proteoglycans on endothelial cell surface, likely preventing chemokine gradient formation. In a negative feedback mechanism, may limit excessive neutrophil recruitment at inflammatory sites by antagonizing the association of CXCL8 with glycosaminoglycans on vascular endothelium. Has a role in osteogenesis and bone remodeling. Inhibits BMP2-dependent differentiation of mesenchymal stem cell to osteoblasts. Protects against bone erosion during inflammation by inhibiting TNFSF11/RANKL-dependent osteoclast activation. In Oryctolagus cuniculus (Rabbit), this protein is Tumor necrosis factor-inducible gene 6 protein (TNFAIP6).